Here is a 260-residue protein sequence, read N- to C-terminus: Exosome complex component Rrp4 (260 aa).

Positions Asn-59–Arg-128 constitute an S1 motif domain. In terms of domain architecture, KH spans Lys-136–Leu-194.

It belongs to the RRP4 family. Component of the archaeal exosome complex. Forms a trimer of Rrp4 and/or Csl4 subunits. The trimer associates with a hexameric ring-like arrangement composed of 3 Rrp41-Rrp42 heterodimers.

It is found in the cytoplasm. Non-catalytic component of the exosome, which is a complex involved in RNA degradation. Increases the RNA binding and the efficiency of RNA degradation. Confers strong poly(A) specificity to the exosome. This Methanosarcina acetivorans (strain ATCC 35395 / DSM 2834 / JCM 12185 / C2A) protein is Exosome complex component Rrp4.